We begin with the raw amino-acid sequence, 173 residues long: Lipoprotein signal peptidase (173 aa).

2 helical membrane-spanning segments follow: residues 67–87 (WISL…PHLG) and 92–112 (MGFG…FAFG). Residues Asp-116 and Asp-132 contribute to the active site. A helical membrane pass occupies residues 125–145 (FPVFNGADIAINLGLACLLIG). The disordered stretch occupies residues 151–173 (SRTPAPARPASKQIREPTDTTGG). Residues 163-173 (QIREPTDTTGG) show a composition bias toward basic and acidic residues.

The protein belongs to the peptidase A8 family.

Its subcellular location is the cell inner membrane. It carries out the reaction Release of signal peptides from bacterial membrane prolipoproteins. Hydrolyzes -Xaa-Yaa-Zaa-|-(S,diacylglyceryl)Cys-, in which Xaa is hydrophobic (preferably Leu), and Yaa (Ala or Ser) and Zaa (Gly or Ala) have small, neutral side chains.. The protein operates within protein modification; lipoprotein biosynthesis (signal peptide cleavage). In terms of biological role, this protein specifically catalyzes the removal of signal peptides from prolipoproteins. The polypeptide is Lipoprotein signal peptidase (Gloeobacter violaceus (strain ATCC 29082 / PCC 7421)).